A 66-amino-acid chain; its full sequence is Small ribosomal subunit protein bS21 (66 aa).

The protein belongs to the bacterial ribosomal protein bS21 family.

This chain is Small ribosomal subunit protein bS21, found in Rickettsia peacockii (strain Rustic).